Here is a 125-residue protein sequence, read N- to C-terminus: Histone H2A (125 aa).

A compositionally biased stretch (basic residues) spans 1-18; the sequence is MSGRGKGGKAKAKAKSRS. The tract at residues 1-21 is disordered; it reads MSGRGKGGKAKAKAKSRSSRA. Serine 2 bears the N-acetylserine mark. Position 104 is an N5-methylglutamine (glutamine 104).

Belongs to the histone H2A family. As to quaternary structure, the nucleosome is a histone octamer containing two molecules each of H2A, H2B, H3 and H4 assembled in one H3-H4 heterotetramer and two H2A-H2B heterodimers. The octamer wraps approximately 147 bp of DNA.

The protein resides in the nucleus. It localises to the chromosome. Its function is as follows. Core component of nucleosome. Nucleosomes wrap and compact DNA into chromatin, limiting DNA accessibility to the cellular machineries which require DNA as a template. Histones thereby play a central role in transcription regulation, DNA repair, DNA replication and chromosomal stability. DNA accessibility is regulated via a complex set of post-translational modifications of histones, also called histone code, and nucleosome remodeling. This Mytilus trossulus (Blue mussel) protein is Histone H2A.